The chain runs to 133 residues: U-scoloptoxin(11)-Sm1a (133 aa).

A signal peptide spans 1–19; the sequence is MIWFLAFILFLAAGELVSS.

It belongs to the scoloptoxin-11 family. Contains 10 disulfide bonds. In terms of tissue distribution, expressed by the venom gland.

Its subcellular location is the secreted. This Scolopendra morsitans (Tanzanian blue ringleg centipede) protein is U-scoloptoxin(11)-Sm1a.